The primary structure comprises 374 residues: MKFFNREKEINKILSIIEGEPNNIYFIYGSLNSGKSTLMREIVVNRLDISKYIPFFIDFRTRNILNVDNFIECLFEVDEKSEIDDFREYAKSLADLLVKGSEEISKYYLGMPIKIPKPFFDKIFNKKDKSADVYQYIEYLFAKLNEKGKKPILIFDELQMIKEITLNGNRKLLWSLFQFLVALTKVQHLCHVFCLSSDSLFIEYVYKTGELEGRADYILVDDFDKQTALKFIDFLAKEILNKKLPKDEKELIYSYVGGKPVLIIKVIDKLRYENLNDILDFMLKDATQKLKYFLNDLDYIKPKVEVGDEVIELKKEDIVKALKLFKDSYEISDSEVAKPIYVYLVKKNILFLNPIEGILKPQSFLIWNAIKRLL.

Position 29-36 (29-36 (GSLNSGKS)) interacts with ATP.

This sequence belongs to the archaeal ATPase family.

This is an uncharacterized protein from Methanocaldococcus jannaschii (strain ATCC 43067 / DSM 2661 / JAL-1 / JCM 10045 / NBRC 100440) (Methanococcus jannaschii).